Here is a 157-residue protein sequence, read N- to C-terminus: Large ribosomal subunit protein uL11 (157 aa).

This sequence belongs to the universal ribosomal protein uL11 family. As to quaternary structure, part of the ribosomal stalk of the 50S ribosomal subunit. Interacts with L10 and the large rRNA to form the base of the stalk. L10 forms an elongated spine to which L12 dimers bind in a sequential fashion forming a multimeric L10(L12)X complex.

In terms of biological role, forms part of the ribosomal stalk which helps the ribosome interact with GTP-bound translation factors. This Methanocorpusculum labreanum (strain ATCC 43576 / DSM 4855 / Z) protein is Large ribosomal subunit protein uL11.